The primary structure comprises 113 residues: MNILDKIDAASLRDDVPAFRAGDTLDVHVKVIEGTTTRTQLFKGVVIRRQGGGIRETFTVRKVSFGIGVERTFPVHSPNIEKIEVVRRGDVRRAKLYYLRELRGKAARIKEKR.

It belongs to the bacterial ribosomal protein bL19 family.

Its function is as follows. This protein is located at the 30S-50S ribosomal subunit interface and may play a role in the structure and function of the aminoacyl-tRNA binding site. This chain is Large ribosomal subunit protein bL19, found in Corynebacterium glutamicum (strain R).